Consider the following 196-residue polypeptide: MNNDLIAKAAIDRRMAEIITPVIEDMGFELVRVRLMSGKSTILQIMADRPDGGIEVDDCAEISQAVSAVLDVEDPILDEYTLEVSSPGIDRPLTRLKDFEMFEGYEAKIETGDMVDGRRRFKGALAGVEDDEVLINIEEGTIGLKFDWLSDAKLVLTDDLIKEMLRQRKAAGALDETNFDEVSTELETDTPSEGDQ.

The segment at 176 to 196 is disordered; the sequence is ETNFDEVSTELETDTPSEGDQ. Residues 177 to 196 are compositionally biased toward acidic residues; sequence TNFDEVSTELETDTPSEGDQ.

This sequence belongs to the RimP family.

Its subcellular location is the cytoplasm. Its function is as follows. Required for maturation of 30S ribosomal subunits. This is Ribosome maturation factor RimP from Roseobacter denitrificans (strain ATCC 33942 / OCh 114) (Erythrobacter sp. (strain OCh 114)).